Here is a 156-residue protein sequence, read N- to C-terminus: Translation initiation factor IF-1, chloroplastic (156 aa).

The segment at 1 to 35 is disordered; sequence MAASLTLMTSPPCSRSSKSPSPSPSPSLSCNQQQQ. The N-terminal 49 residues, 1–49, are a transit peptide targeting the chloroplast; it reads MAASLTLMTSPPCSRSSKSPSPSPSPSLSCNQQQQYKPLLHHQWPPQIS. Positions 10-20 are enriched in low complexity; the sequence is SPPCSRSSKSP. The S1-like domain maps to 72 to 148; that stretch reads GGSPSVQEQK…TRGRITYRLR (77 aa).

Belongs to the IF-1 family. As to quaternary structure, component of the 30S ribosomal translation pre-initiation complex which assembles on the 30S ribosome in the order IF-2 and IF-3, IF-1 and N-formylmethionyl-tRNA(fMet); mRNA recruitment can occur at any time during PIC assembly.

It is found in the plastid. It localises to the chloroplast. In terms of biological role, one of the essential components for the initiation of protein synthesis. Stabilizes the binding of IF-2 and IF-3 on the 30S subunit to which N-formylmethionyl-tRNA(fMet) subsequently binds. Helps modulate mRNA selection, yielding the 30S pre-initiation complex (PIC). Upon addition of the 50S ribosomal subunit IF-1, IF-2 and IF-3 are released leaving the mature 70S translation initiation complex. The chain is Translation initiation factor IF-1, chloroplastic (infA) from Mesembryanthemum crystallinum (Common ice plant).